The primary structure comprises 210 residues: Thymidylate kinase (210 aa).

11-18 (GLEGAGKS) provides a ligand contact to ATP.

This sequence belongs to the thymidylate kinase family.

The enzyme catalyses dTMP + ATP = dTDP + ADP. In terms of biological role, phosphorylation of dTMP to form dTDP in both de novo and salvage pathways of dTTP synthesis. The protein is Thymidylate kinase of Histophilus somni (strain 129Pt) (Haemophilus somnus).